The following is a 242-amino-acid chain: Uridylate kinase (242 aa).

17–20 (KLGG) serves as a coordination point for ATP. Gly58 contributes to the UMP binding site. Residues Gly59 and Arg63 each coordinate ATP. UMP contacts are provided by residues Asp78 and 139 to 146 (MGMPYFST). 2 residues coordinate ATP: Phe172 and Asp175.

The protein belongs to the UMP kinase family. Homohexamer.

It localises to the cytoplasm. It carries out the reaction UMP + ATP = UDP + ADP. It functions in the pathway pyrimidine metabolism; CTP biosynthesis via de novo pathway; UDP from UMP (UMPK route): step 1/1. With respect to regulation, inhibited by UTP. Catalyzes the reversible phosphorylation of UMP to UDP. This Rhodococcus jostii (strain RHA1) protein is Uridylate kinase.